Here is a 253-residue protein sequence, read N- to C-terminus: 5'/3'-nucleotidase SurE (253 aa).

A divalent metal cation-binding residues include D8, D9, S39, and N92.

The protein belongs to the SurE nucleotidase family. The cofactor is a divalent metal cation.

It is found in the cytoplasm. The catalysed reaction is a ribonucleoside 5'-phosphate + H2O = a ribonucleoside + phosphate. It catalyses the reaction a ribonucleoside 3'-phosphate + H2O = a ribonucleoside + phosphate. It carries out the reaction [phosphate](n) + H2O = [phosphate](n-1) + phosphate + H(+). Nucleotidase with a broad substrate specificity as it can dephosphorylate various ribo- and deoxyribonucleoside 5'-monophosphates and ribonucleoside 3'-monophosphates with highest affinity to 3'-AMP. Also hydrolyzes polyphosphate (exopolyphosphatase activity) with the preference for short-chain-length substrates (P20-25). Might be involved in the regulation of dNTP and NTP pools, and in the turnover of 3'-mononucleotides produced by numerous intracellular RNases (T1, T2, and F) during the degradation of various RNAs. In Escherichia coli O127:H6 (strain E2348/69 / EPEC), this protein is 5'/3'-nucleotidase SurE.